Consider the following 563-residue polypeptide: Germacrene-A synthase (563 aa).

4 residues coordinate Mg(2+): D316, D320, D461, and E469. A DDXXD motif motif is present at residues 316 to 320 (DDIYD).

It belongs to the terpene synthase family. Tpsa subfamily. Requires Mg(2+) as cofactor. Expressed in young leaves. Detected in trichomes and cones.

It carries out the reaction (2E,6E)-farnesyl diphosphate = (+)-(R)-germacrene A + diphosphate. The protein operates within secondary metabolite biosynthesis; terpenoid biosynthesis. Functionally, sesquiterpene synthase that catalyzes the formation of germacrene A. Can use farnesyl diphosphate as substrate, but not geranyl diphosphate or geranylgeranyl diphosphate. Beta-elemene, the initially measured product in the assay, is derived nonenzymatically from germacrene A. The polypeptide is Germacrene-A synthase (Humulus lupulus (European hop)).